A 405-amino-acid chain; its full sequence is Indoleamine 2,3-dioxygenase 2 (405 aa).

Residue histidine 347 coordinates heme.

Belongs to the indoleamine 2,3-dioxygenase family. The cofactor is heme. As to expression, expressed mainly in antigen-presenting immune cells, liver, kidney, brain, and placenta. Highly expressed in kidney, followed by epididymis and liver (at protein level). Detected in the tails of the spermatozoa in the testis and in the kidney tubules (at protein level). Constitutively expressed in brain.

It catalyses the reaction L-tryptophan + O2 = N-formyl-L-kynurenine. It functions in the pathway amino-acid degradation; L-tryptophan degradation via kynurenine pathway; L-kynurenine from L-tryptophan: step 1/2. With respect to regulation, activity is inhibited by D-1MT (1-methyl-D-tryptophan) and MTH-trp (methylthiohydantoin-DL-tryptophan) but not L-1MT (1-methyl-L-tryptophan). In terms of biological role, catalyzes the first and rate-limiting step in the kynurenine pathway of tryptophan catabolism. Involved in immune regulation. The polypeptide is Indoleamine 2,3-dioxygenase 2 (Mus musculus (Mouse)).